A 465-amino-acid chain; its full sequence is Dihydrolipoyl dehydrogenase (465 aa).

FAD-binding positions include 34-42 (EEREAGGTC), lysine 51, and glycine 114. Cysteine 42 and cysteine 47 are joined by a disulfide. NAD(+)-binding positions include 180 to 184 (GGGVI), glutamate 203, valine 237, and 264 to 267 (SIGR). FAD is bound by residues aspartate 307 and alanine 315. Residue histidine 439 is the Proton acceptor of the active site.

This sequence belongs to the class-I pyridine nucleotide-disulfide oxidoreductase family. FAD is required as a cofactor.

The protein localises to the cytoplasm. It carries out the reaction N(6)-[(R)-dihydrolipoyl]-L-lysyl-[protein] + NAD(+) = N(6)-[(R)-lipoyl]-L-lysyl-[protein] + NADH + H(+). The branched-chain alpha-keto dehydrogenase complex catalyzes the overall conversion of alpha-keto acids to acyl-CoA and CO(2). It contains multiple copies of 3 enzymatic components: branched-chain alpha-keto acid decarboxylase (E1), lipoamide acyltransferase (E2) and lipoamide dehydrogenase (E3). This chain is Dihydrolipoyl dehydrogenase (lpdA), found in Chlamydia muridarum (strain MoPn / Nigg).